Consider the following 673-residue polypeptide: Annexin A6 (673 aa).

The residue at position 2 (alanine 2) is an N-acetylalanine. At serine 13 the chain carries Phosphoserine. Annexin repeat units lie at residues 20 to 91 (FDAN…NLMR), 92 to 163 (PLAY…VLLQ), 175 to 247 (DLVQ…AVVK), 251 to 322 (STPE…KLCG), 363 to 434 (FNPD…GLMM), 435 to 506 (PPAH…SLAT), 521 to 595 (EDAQ…AIVQ), and 599 to 670 (NKPL…ALCG). Residue tyrosine 30 is modified to Phosphotyrosine. N6-acetyllysine occurs at positions 63, 68, 75, and 81. Tyrosine 201 bears the Phosphotyrosine mark. N6-acetyllysine is present on residues lysine 306, lysine 370, and lysine 418. Serine 422 is modified (phosphoserine). Lysine 483 carries the N6-acetyllysine modification. Serine 537 carries the phosphoserine modification. At lysine 620 the chain carries N6-acetyllysine.

This sequence belongs to the annexin family.

The protein resides in the cytoplasm. The protein localises to the melanosome. In terms of biological role, may associate with CD21. May regulate the release of Ca(2+) from intracellular stores. This chain is Annexin A6 (Anxa6), found in Rattus norvegicus (Rat).